We begin with the raw amino-acid sequence, 706 residues long: Glycine--tRNA ligase beta subunit (706 aa).

This sequence belongs to the class-II aminoacyl-tRNA synthetase family. In terms of assembly, tetramer of two alpha and two beta subunits.

Its subcellular location is the cytoplasm. It carries out the reaction tRNA(Gly) + glycine + ATP = glycyl-tRNA(Gly) + AMP + diphosphate. This chain is Glycine--tRNA ligase beta subunit, found in Hyphomonas neptunium (strain ATCC 15444).